A 75-amino-acid polypeptide reads, in one-letter code: Translational regulator CsrA (75 aa).

Belongs to the CsrA/RsmA family. In terms of assembly, homodimer; the beta-strands of each monomer intercalate to form a hydrophobic core, while the alpha-helices form wings that extend away from the core.

The protein localises to the cytoplasm. A translational regulator that binds mRNA to regulate translation initiation and/or mRNA stability. Usually binds in the 5'-UTR at or near the Shine-Dalgarno sequence preventing ribosome-binding, thus repressing translation. Its main target seems to be the major flagellin gene, while its function is anatagonized by FliW. The chain is Translational regulator CsrA from Treponema denticola (strain ATCC 35405 / DSM 14222 / CIP 103919 / JCM 8153 / KCTC 15104).